The primary structure comprises 286 residues: Acetyl-coenzyme A carboxylase carboxyl transferase subunit beta (286 aa).

The region spanning 28–286 (LMQKCSNCKK…KMHMDGRQLK (259 aa)) is the CoA carboxyltransferase N-terminal domain. Positions 32, 35, 51, and 54 each coordinate Zn(2+). The C4-type zinc-finger motif lies at 32 to 54 (CSNCKKIYYRKEMVKALQVCPNC).

Belongs to the AccD/PCCB family. In terms of assembly, acetyl-CoA carboxylase is a heterohexamer composed of biotin carboxyl carrier protein (AccB), biotin carboxylase (AccC) and two subunits each of ACCase subunit alpha (AccA) and ACCase subunit beta (AccD). Zn(2+) is required as a cofactor.

It localises to the cytoplasm. It carries out the reaction N(6)-carboxybiotinyl-L-lysyl-[protein] + acetyl-CoA = N(6)-biotinyl-L-lysyl-[protein] + malonyl-CoA. It functions in the pathway lipid metabolism; malonyl-CoA biosynthesis; malonyl-CoA from acetyl-CoA: step 1/1. Component of the acetyl coenzyme A carboxylase (ACC) complex. Biotin carboxylase (BC) catalyzes the carboxylation of biotin on its carrier protein (BCCP) and then the CO(2) group is transferred by the transcarboxylase to acetyl-CoA to form malonyl-CoA. The polypeptide is Acetyl-coenzyme A carboxylase carboxyl transferase subunit beta (Oceanobacillus iheyensis (strain DSM 14371 / CIP 107618 / JCM 11309 / KCTC 3954 / HTE831)).